Reading from the N-terminus, the 316-residue chain is Acetaldehyde dehydrogenase (316 aa).

12-15 (SGNI) contributes to the NAD(+) binding site. Residue Cys-132 is the Acyl-thioester intermediate of the active site. NAD(+) is bound by residues 163 to 171 (SAGPGTRAN) and Asn-289.

Belongs to the acetaldehyde dehydrogenase family.

The enzyme catalyses acetaldehyde + NAD(+) + CoA = acetyl-CoA + NADH + H(+). This Bordetella avium (strain 197N) protein is Acetaldehyde dehydrogenase (bphG).